A 69-amino-acid polypeptide reads, in one-letter code: Large ribosomal subunit protein uL29 (69 aa).

The protein belongs to the universal ribosomal protein uL29 family.

The protein is Large ribosomal subunit protein uL29 of Synechococcus sp. (strain WH7803).